The sequence spans 147 residues: MLAMSDFCTQHPLFSYAVAIVVLLAAMLGLGAVSGTRRVGAARGRSMDLPFESGVLPVGSAHLRIPVQYYLVAMLFVIFDVESVFLFSWAPVAVGAGWRGYGAVVVFVASLAAALAYVWRWGALDWGPVPRRRIDYRRAGDASCAGR.

The next 3 helical transmembrane spans lie at 13 to 33 (LFSY…LGAV), 70 to 90 (YLVA…FSWA), and 104 to 124 (VVVF…WGAL).

The protein belongs to the complex I subunit 3 family. NDH-1 is composed of 14 different subunits. Subunits NuoA, H, J, K, L, M, N constitute the membrane sector of the complex.

The protein resides in the cell inner membrane. It carries out the reaction a quinone + NADH + 5 H(+)(in) = a quinol + NAD(+) + 4 H(+)(out). In terms of biological role, NDH-1 shuttles electrons from NADH, via FMN and iron-sulfur (Fe-S) centers, to quinones in the respiratory chain. The immediate electron acceptor for the enzyme in this species is believed to be ubiquinone. Couples the redox reaction to proton translocation (for every two electrons transferred, four hydrogen ions are translocated across the cytoplasmic membrane), and thus conserves the redox energy in a proton gradient. The chain is NADH-quinone oxidoreductase subunit A from Gluconacetobacter diazotrophicus (strain ATCC 49037 / DSM 5601 / CCUG 37298 / CIP 103539 / LMG 7603 / PAl5).